The sequence spans 772 residues: PDZ domain-containing protein 4 (772 aa).

The 86-residue stretch at Glu-136 to Glu-221 folds into the PDZ domain. The disordered stretch occupies residues Asp-239–Phe-320. Ser-242 carries the phosphoserine modification. Residues Arg-287–Leu-303 show a composition bias toward basic and acidic residues. Residues Val-394–Ala-424 adopt a coiled-coil conformation. The disordered stretch occupies residues Ala-450 to Ser-573. Residues Glu-452–Ser-472 show a composition bias toward basic and acidic residues. Position 459 is a phosphoserine (Ser-459). Composition is skewed to polar residues over residues Thr-473 to Ser-484 and Ala-502 to Pro-511. Over residues Leu-535–Arg-552 the composition is skewed to basic and acidic residues.

The protein resides in the cytoplasm. It is found in the cell cortex. The sequence is that of PDZ domain-containing protein 4 (Pdzd4) from Mus musculus (Mouse).